The following is a 100-amino-acid chain: Aspartyl/glutamyl-tRNA(Asn/Gln) amidotransferase subunit C (100 aa).

The protein belongs to the GatC family. As to quaternary structure, heterotrimer of A, B and C subunits.

The enzyme catalyses L-glutamyl-tRNA(Gln) + L-glutamine + ATP + H2O = L-glutaminyl-tRNA(Gln) + L-glutamate + ADP + phosphate + H(+). The catalysed reaction is L-aspartyl-tRNA(Asn) + L-glutamine + ATP + H2O = L-asparaginyl-tRNA(Asn) + L-glutamate + ADP + phosphate + 2 H(+). Functionally, allows the formation of correctly charged Asn-tRNA(Asn) or Gln-tRNA(Gln) through the transamidation of misacylated Asp-tRNA(Asn) or Glu-tRNA(Gln) in organisms which lack either or both of asparaginyl-tRNA or glutaminyl-tRNA synthetases. The reaction takes place in the presence of glutamine and ATP through an activated phospho-Asp-tRNA(Asn) or phospho-Glu-tRNA(Gln). The sequence is that of Aspartyl/glutamyl-tRNA(Asn/Gln) amidotransferase subunit C from Rickettsia rickettsii (strain Sheila Smith).